We begin with the raw amino-acid sequence, 283 residues long: Protein/nucleic acid deglycase HchA (283 aa).

The Zn(2+) site is built by histidine 86, glutamate 91, and histidine 123. Cysteine 185 acts as the Nucleophile in catalysis.

It belongs to the peptidase C56 family. HchA subfamily. As to quaternary structure, homodimer.

The protein localises to the cytoplasm. The catalysed reaction is N(omega)-(1-hydroxy-2-oxopropyl)-L-arginyl-[protein] + H2O = lactate + L-arginyl-[protein] + H(+). It catalyses the reaction N(6)-(1-hydroxy-2-oxopropyl)-L-lysyl-[protein] + H2O = lactate + L-lysyl-[protein] + H(+). It carries out the reaction S-(1-hydroxy-2-oxopropyl)-L-cysteinyl-[protein] + H2O = lactate + L-cysteinyl-[protein] + H(+). The enzyme catalyses N(omega)-(1-hydroxy-2-oxoethyl)-L-arginyl-[protein] + H2O = L-arginyl-[protein] + glycolate + H(+). The catalysed reaction is N(6)-(1-hydroxy-2-oxoethyl)-L-lysyl-[protein] + H2O = glycolate + L-lysyl-[protein] + H(+). It catalyses the reaction S-(1-hydroxy-2-oxoethyl)-L-cysteinyl-[protein] + H2O = glycolate + L-cysteinyl-[protein] + H(+). It carries out the reaction N(2)-(1-hydroxy-2-oxopropyl)-dGTP + H2O = lactate + dGTP + H(+). The enzyme catalyses N(2)-(1-hydroxy-2-oxopropyl)-GTP + H2O = lactate + GTP + H(+). The catalysed reaction is N(2)-(1-hydroxy-2-oxopropyl)-GDP + H2O = lactate + GDP + H(+). It catalyses the reaction N(2)-(1-hydroxy-2-oxopropyl)-GMP + H2O = lactate + GMP + H(+). It carries out the reaction N(2)-(1-hydroxy-2-oxoethyl)-dGTP + H2O = dGTP + glycolate + H(+). The enzyme catalyses N(2)-(1-hydroxy-2-oxoethyl)-GTP + H2O = glycolate + GTP + H(+). The catalysed reaction is N(2)-(1-hydroxy-2-oxoethyl)-GDP + H2O = glycolate + GDP + H(+). It catalyses the reaction N(2)-(1-hydroxy-2-oxoethyl)-GMP + H2O = glycolate + GMP + H(+). It carries out the reaction an N(2)-(1-hydroxy-2-oxopropyl)-guanosine in RNA + H2O = a guanosine in RNA + lactate + H(+). The enzyme catalyses an N(2)-(1-hydroxy-2-oxopropyl)-2'-deoxyguanosine in DNA + H2O = a 2'-deoxyguanosine in DNA + lactate + H(+). The catalysed reaction is an N(2)-(1-hydroxy-2-oxoethyl)-guanosine in RNA + H2O = a guanosine in RNA + glycolate + H(+). It catalyses the reaction an N(2)-(1-hydroxy-2-oxoethyl)-2'-deoxyguanosine in DNA + H2O = a 2'-deoxyguanosine in DNA + glycolate + H(+). Protein and nucleotide deglycase that catalyzes the deglycation of the Maillard adducts formed between amino groups of proteins or nucleotides and reactive carbonyl groups of glyoxals. Thus, functions as a protein deglycase that repairs methylglyoxal- and glyoxal-glycated proteins, and releases repaired proteins and lactate or glycolate, respectively. Deglycates cysteine, arginine and lysine residues in proteins, and thus reactivates these proteins by reversing glycation by glyoxals. Acts on early glycation intermediates (hemithioacetals and aminocarbinols), preventing the formation of Schiff bases and advanced glycation endproducts (AGE). Also functions as a nucleotide deglycase able to repair glycated guanine in the free nucleotide pool (GTP, GDP, GMP, dGTP) and in DNA and RNA. Is thus involved in a major nucleotide repair system named guanine glycation repair (GG repair), dedicated to reversing methylglyoxal and glyoxal damage via nucleotide sanitization and direct nucleic acid repair. Plays an important role in protecting cells from carbonyl stress. This chain is Protein/nucleic acid deglycase HchA, found in Escherichia coli O45:K1 (strain S88 / ExPEC).